The chain runs to 362 residues: MAPTKRKGSCPGAAPKKPKEPVQVPKLVIKGGIEVLGVKTGVDSFTEVECFLNPQMGNPDEHQKGLSKSLAAEKQFTDDSPDKEQLPCYSVARIPLPNINEDLTCGNILMWEAVTVKTEVIGVTAMLNLHSGTQKTHENGAGKPIQGSNFHFFAVGGEPLELQGVLANYRTKYPAQTVTPKNATVDSQQMNTDHKAVLDKDNAYPVECWVPDPSKNENTRYFGTYTGGENVPPVLHITNTATTVLLDEQGVGPLCKADSLYVSAVDICGLFTNTSGTQQWKGLPRYFKITLRKRSVKNPYPISFLLSDLINRRTQRVDGQPMIGMSSQVEEVRVYEDTEELPGDPDMIRYIDEFGQTTTRMQ.

Positions 1–21 (MAPTKRKGSCPGAAPKKPKEP) are disordered. The Bipartite nuclear localization signal signature appears at 5–19 (KRKGSCPGAAPKKPK). The segment at 302-362 (ISFLLSDLIN…EFGQTTTRMQ (61 aa)) is C-terminal arm. Residue Thr338 is modified to Phosphothreonine; by host.

Belongs to the polyomaviruses coat protein VP1 family. Homomultimer; disulfide-linked. The virus capsid is composed of 72 icosahedral units, each one composed of five disulfide-linked copies of VP1. Interacts with agnoprotein. Interacts with minor capsid proteins VP2 and VP3. Interacts with host HSPA8; this interaction probably participates in virus assembly. Interacts with host SP1; this interaction enhances the efficiency of viral packaging.

It is found in the virion. Its subcellular location is the host nucleus. The protein resides in the host endoplasmic reticulum. In terms of biological role, forms an icosahedral capsid with a T=7 symmetry and a 40 nm diameter. The capsid is composed of 72 pentamers linked to each other by disulfide bonds and associated with VP2 or VP3 proteins. Binds to N-glycolylneuraminic analog of the ganglioside GM1 on the cell surface to provide virion attachment to target cell. Once attached, the virion is internalized by caveolin-mediated endocytosis and traffics to the endoplasmic reticulum. Inside the endoplasmic reticulum, the protein folding machinery isomerizes VP1 interpentamer disulfide bonds, thereby triggering initial uncoating. Next, the virion uses the endoplasmic reticulum-associated degradation machinery to probably translocate in the cytosol before reaching the nucleus. Nuclear entry of the viral DNA involves the selective exposure and importin recognition of VP2/Vp3 nuclear localization signal. The assembly takes place in the cell nucleus. Encapsulates the genomic DNA and participates in rearranging nucleosomes around the viral DNA. The viral progenies exit the cells by lytic release. This chain is Major capsid protein VP1, found in Macaca (macaques).